Reading from the N-terminus, the 700-residue chain is AP-1-like transcription factor yap1 (700 aa).

Disordered stretches follow at residues 17–185 (SPGH…KDLE) and 228–296 (MPVN…VSLR). The short motif at 34–41 (MPVPGRDT) is the Bipartite nuclear localization signal element. The span at 47–59 (PSVSNGSQPSAHQ) shows a compositional bias: polar residues. Residues 67–74 (SPTPEMPP) carry the Bipartite nuclear localization signal motif. A compositionally biased stretch (acidic residues) spans 103–112 (LDDDDDDASD). The segment covering 127–138 (AGRAAAASASGS) has biased composition (low complexity). Residues 150 to 185 (GDGKRELSKSERRKEQNRAAQKAFRERREAKVKDLE) are compositionally biased toward basic and acidic residues. One can recognise a bZIP domain in the interval 156–219 (LSKSERRKEQ…KRLQEENVAL (64 aa)). Residues 158 to 182 (KSERRKEQNRAAQKAFRERREAKVK) form a basic motif region. A leucine-zipper region spans residues 184–191 (LEDKVAEL). Transcription activation stretches follow at residues 213–400 (QEEN…QPDS) and 452–577 (LGAT…GRGN). Residues 231–244 (NSRNSPNSNNGSFS) are compositionally biased toward low complexity. Polar residues predominate over residues 280–296 (SANTISDNSSESLVSLR). The tract at residues 306 to 318 (FSDHFNTYALGVV) is n-CRD. Disordered regions lie at residues 320-359 (VPPP…PSAD) and 542-609 (NYLN…KATT). 2 stretches are compositionally biased toward low complexity: residues 335–358 (SASN…PPSA) and 542–573 (NYLN…NVSS). Residues 589 to 607 (MGSSRTSVSHDSTDLQGKA) are compositionally biased toward polar residues. Residues 642–675 (PSELWMRFGMQHENSTEHLLIDDLCDQMRAKATC) form a c-CRD region. The Nuclear export signal signature appears at 660 to 667 (LLIDDLCD). Cys-666 and Cys-675 are oxidised to a cystine.

It belongs to the bZIP family. YAP subfamily. Depending on the oxidative stress inducing agent, yap1 can undergo two distinct conformational changes, both involving disulfide bond formation, and both masking the nuclear export signal, thus abolishing nuclear export.

It localises to the nucleus. Its subcellular location is the cytoplasm. Functionally, transcription activator involved in oxidative stress response and redox homeostasis. Regulates the transcription of genes encoding antioxidant enzymes and components of the cellular thiol-reducing pathways. Involved in antifungal resistance to fluconazole. The sequence is that of AP-1-like transcription factor yap1 from Cryptococcus neoformans var. grubii serotype A (strain H99 / ATCC 208821 / CBS 10515 / FGSC 9487) (Filobasidiella neoformans var. grubii).